The chain runs to 170 residues: Probable calcium-binding protein CML29 (170 aa).

EF-hand domains follow at residues 27-62 (SYISSLVEAFQAFDSDNDGLVTAPELRGLLASLGLD), 63-98 (KPEHEVRDMLARADADRDGKLSVEELLDVMNAGQLG), and 138-170 (ASVEDCMEIIACMDGDGDGAISVEEFRLMAQLL). 13 residues coordinate Ca(2+): Asp-40, Asp-42, Asp-44, Glu-51, Asp-76, Asp-78, Asp-80, Lys-82, Glu-87, Asp-151, Asp-153, Asp-155, and Glu-162.

Its function is as follows. Potential calcium sensor. The protein is Probable calcium-binding protein CML29 (CML29) of Oryza sativa subsp. japonica (Rice).